Reading from the N-terminus, the 139-residue chain is UPF0216 protein MJ1224 (139 aa).

Belongs to the UPF0216 family.

This Methanocaldococcus jannaschii (strain ATCC 43067 / DSM 2661 / JAL-1 / JCM 10045 / NBRC 100440) (Methanococcus jannaschii) protein is UPF0216 protein MJ1224.